Here is a 473-residue protein sequence, read N- to C-terminus: Cysteine--tRNA ligase (473 aa).

Cys28 contributes to the Zn(2+) binding site. Residues 30 to 40 (VTVYDLCHLGH) carry the 'HIGH' region motif. The Zn(2+) site is built by Cys213, His238, and Glu242. Residues 270–274 (KMSKS) carry the 'KMSKS' region motif. Lys273 provides a ligand contact to ATP.

Belongs to the class-I aminoacyl-tRNA synthetase family. As to quaternary structure, monomer. The cofactor is Zn(2+).

The protein resides in the cytoplasm. The catalysed reaction is tRNA(Cys) + L-cysteine + ATP = L-cysteinyl-tRNA(Cys) + AMP + diphosphate. This chain is Cysteine--tRNA ligase, found in Blochmanniella pennsylvanica (strain BPEN).